A 215-amino-acid chain; its full sequence is Fanconi anemia core complex-associated protein 24 (215 aa).

Belongs to the multisubunit FA complex composed of FANCA, FANCB, FANCC, FANCE, FANCF, FANCG, FANCL/PHF9, FANCM and FAAP24. Interacts with FANCM.

Its subcellular location is the nucleus. In terms of biological role, plays a role in DNA repair through recruitment of the FA core complex to damaged DNA. Regulates FANCD2 monoubiquitination upon DNA damage. Induces chromosomal instability as well as hypersensitivity to DNA cross-linking agents, when repressed. Targets FANCM/FAAP24 complex to the DNA, preferentially to single strand DNA. In Bos taurus (Bovine), this protein is Fanconi anemia core complex-associated protein 24.